We begin with the raw amino-acid sequence, 289 residues long: 4-diphosphocytidyl-2-C-methyl-D-erythritol kinase (289 aa).

The active site involves Lys10. Position 94–104 (94–104 (PVAAGLAGGSS)) interacts with ATP. The active site involves Asp136.

It belongs to the GHMP kinase family. IspE subfamily.

It carries out the reaction 4-CDP-2-C-methyl-D-erythritol + ATP = 4-CDP-2-C-methyl-D-erythritol 2-phosphate + ADP + H(+). It functions in the pathway isoprenoid biosynthesis; isopentenyl diphosphate biosynthesis via DXP pathway; isopentenyl diphosphate from 1-deoxy-D-xylulose 5-phosphate: step 3/6. Catalyzes the phosphorylation of the position 2 hydroxy group of 4-diphosphocytidyl-2C-methyl-D-erythritol. The polypeptide is 4-diphosphocytidyl-2-C-methyl-D-erythritol kinase (Bacillus mycoides (strain KBAB4) (Bacillus weihenstephanensis)).